Here is a 475-residue protein sequence, read N- to C-terminus: Aspartyl/glutamyl-tRNA(Asn/Gln) amidotransferase subunit B (475 aa).

The protein belongs to the GatB/GatE family. GatB subfamily. In terms of assembly, heterotrimer of A, B and C subunits.

It carries out the reaction L-glutamyl-tRNA(Gln) + L-glutamine + ATP + H2O = L-glutaminyl-tRNA(Gln) + L-glutamate + ADP + phosphate + H(+). The catalysed reaction is L-aspartyl-tRNA(Asn) + L-glutamine + ATP + H2O = L-asparaginyl-tRNA(Asn) + L-glutamate + ADP + phosphate + 2 H(+). Allows the formation of correctly charged Asn-tRNA(Asn) or Gln-tRNA(Gln) through the transamidation of misacylated Asp-tRNA(Asn) or Glu-tRNA(Gln) in organisms which lack either or both of asparaginyl-tRNA or glutaminyl-tRNA synthetases. The reaction takes place in the presence of glutamine and ATP through an activated phospho-Asp-tRNA(Asn) or phospho-Glu-tRNA(Gln). This Staphylococcus haemolyticus (strain JCSC1435) protein is Aspartyl/glutamyl-tRNA(Asn/Gln) amidotransferase subunit B.